A 144-amino-acid polypeptide reads, in one-letter code: MAETQTTKKGAKRVRQPVPARRSKPNRPAKAAPGPHASLSFLRVAPRKVRLVADEVRGMPVGDALAVLKYTPQAAAKHLSKLIRSAVANAEQKGGRVDVDVLVVKTLTVDQGPKMRRFMPRAMGRAFRIEKKTSHVYVELGTAQ.

The disordered stretch occupies residues 1-38 (MAETQTTKKGAKRVRQPVPARRSKPNRPAKAAPGPHAS). A compositionally biased stretch (basic residues) spans 9-27 (KGAKRVRQPVPARRSKPNR).

The protein belongs to the universal ribosomal protein uL22 family. In terms of assembly, part of the 50S ribosomal subunit.

Functionally, this protein binds specifically to 23S rRNA; its binding is stimulated by other ribosomal proteins, e.g. L4, L17, and L20. It is important during the early stages of 50S assembly. It makes multiple contacts with different domains of the 23S rRNA in the assembled 50S subunit and ribosome. Its function is as follows. The globular domain of the protein is located near the polypeptide exit tunnel on the outside of the subunit, while an extended beta-hairpin is found that lines the wall of the exit tunnel in the center of the 70S ribosome. The polypeptide is Large ribosomal subunit protein uL22 (Anaeromyxobacter sp. (strain Fw109-5)).